A 431-amino-acid chain; its full sequence is Acyl transferase 8 (431 aa).

The active-site Proton acceptor is the histidine 169. 3 disordered regions span residues valine 220–alanine 247, histidine 260–arginine 313, and glycine 331–threonine 400. Residues arginine 224–proline 234 are compositionally biased toward low complexity. Over residues aspartate 264–arginine 273 the composition is skewed to gly residues. 2 stretches are compositionally biased toward basic residues: residues glutamate 297–arginine 306 and glycine 335–proline 380. The segment covering glutamine 381–histidine 394 has biased composition (basic and acidic residues).

The protein belongs to the plant acyltransferase family.

In terms of biological role, involved in the incorporation of ferulate into the cell wall. May act as arabinoxylan feruloyl transferase. In Oryza sativa subsp. japonica (Rice), this protein is Acyl transferase 8.